A 236-amino-acid chain; its full sequence is Purine nucleoside phosphorylase DeoD-type 2 (236 aa).

H5 is an a purine D-ribonucleoside binding site. Residues G21, R25, R44, and 88 to 91 (RVGT) contribute to the phosphate site. Residues 180–182 (EME) and 204–205 (SD) each bind a purine D-ribonucleoside. The Proton donor role is filled by D205.

The protein belongs to the PNP/UDP phosphorylase family. As to quaternary structure, homohexamer; trimer of homodimers.

It catalyses the reaction a purine D-ribonucleoside + phosphate = a purine nucleobase + alpha-D-ribose 1-phosphate. The catalysed reaction is a purine 2'-deoxy-D-ribonucleoside + phosphate = a purine nucleobase + 2-deoxy-alpha-D-ribose 1-phosphate. In terms of biological role, catalyzes the reversible phosphorolytic breakdown of the N-glycosidic bond in the beta-(deoxy)ribonucleoside molecules, with the formation of the corresponding free purine bases and pentose-1-phosphate. The protein is Purine nucleoside phosphorylase DeoD-type 2 of Shewanella oneidensis (strain ATCC 700550 / JCM 31522 / CIP 106686 / LMG 19005 / NCIMB 14063 / MR-1).